The chain runs to 163 residues: Phosphopantetheine adenylyltransferase (163 aa).

T10 serves as a coordination point for substrate. ATP contacts are provided by residues 10–11 (TF) and H18. The substrate site is built by K42, L75, and R89. Residues 90-92 (GVR), E100, and 125-131 (YTYVASS) each bind ATP.

It belongs to the bacterial CoaD family. Homohexamer. Requires Mg(2+) as cofactor.

It localises to the cytoplasm. The catalysed reaction is (R)-4'-phosphopantetheine + ATP + H(+) = 3'-dephospho-CoA + diphosphate. It functions in the pathway cofactor biosynthesis; coenzyme A biosynthesis; CoA from (R)-pantothenate: step 4/5. Reversibly transfers an adenylyl group from ATP to 4'-phosphopantetheine, yielding dephospho-CoA (dPCoA) and pyrophosphate. This Pelodictyon phaeoclathratiforme (strain DSM 5477 / BU-1) protein is Phosphopantetheine adenylyltransferase.